A 652-amino-acid polypeptide reads, in one-letter code: DNA ligase (652 aa).

Residues 29-33 (DQEYD), 78-79 (SL), and E107 contribute to the NAD(+) site. The active-site N6-AMP-lysine intermediate is the K109. R130, E164, K278, and K302 together coordinate NAD(+). Zn(2+) contacts are provided by C395, C398, C413, and C418. Positions 577-652 (DTSAQLFGLT…VKDENWLLQL (76 aa)) constitute a BRCT domain.

Belongs to the NAD-dependent DNA ligase family. LigA subfamily. It depends on Mg(2+) as a cofactor. Mn(2+) serves as cofactor.

It carries out the reaction NAD(+) + (deoxyribonucleotide)n-3'-hydroxyl + 5'-phospho-(deoxyribonucleotide)m = (deoxyribonucleotide)n+m + AMP + beta-nicotinamide D-nucleotide.. Functionally, DNA ligase that catalyzes the formation of phosphodiester linkages between 5'-phosphoryl and 3'-hydroxyl groups in double-stranded DNA using NAD as a coenzyme and as the energy source for the reaction. It is essential for DNA replication and repair of damaged DNA. The protein is DNA ligase of Streptococcus uberis (strain ATCC BAA-854 / 0140J).